Reading from the N-terminus, the 880-residue chain is Leucine--tRNA ligase (880 aa).

Positions Pro46–His56 match the 'HIGH' region motif. The segment at Ser483–Pro502 is disordered. Residues Lys638–Ser642 carry the 'KMSKS' region motif. Residue Lys641 coordinates ATP.

This sequence belongs to the class-I aminoacyl-tRNA synthetase family.

Its subcellular location is the cytoplasm. The enzyme catalyses tRNA(Leu) + L-leucine + ATP = L-leucyl-tRNA(Leu) + AMP + diphosphate. This chain is Leucine--tRNA ligase, found in Xanthomonas oryzae pv. oryzae (strain PXO99A).